The sequence spans 343 residues: 3-dehydroquinate synthase (343 aa).

NAD(+) is bound by residues 61–66 (SGEKYK), 95–99 (GVISD), 119–120 (TT), lysine 132, lysine 141, and 159–162 (FLKT). Positions 174, 231, and 248 each coordinate Zn(2+).

It belongs to the sugar phosphate cyclases superfamily. Dehydroquinate synthase family. It depends on Co(2+) as a cofactor. Requires Zn(2+) as cofactor. The cofactor is NAD(+).

The protein localises to the cytoplasm. The catalysed reaction is 7-phospho-2-dehydro-3-deoxy-D-arabino-heptonate = 3-dehydroquinate + phosphate. It functions in the pathway metabolic intermediate biosynthesis; chorismate biosynthesis; chorismate from D-erythrose 4-phosphate and phosphoenolpyruvate: step 2/7. Its function is as follows. Catalyzes the conversion of 3-deoxy-D-arabino-heptulosonate 7-phosphate (DAHP) to dehydroquinate (DHQ). The protein is 3-dehydroquinate synthase of Helicobacter pylori (strain HPAG1).